The sequence spans 263 residues: MFRRGLVFSRHCHYSLIRPRFPLNRTCLARFADGRKNLATDNRTQTYQSWRGMISIRALLLAAATSVGLYAYFQHEKKKVLERQNDKVLATIGRPQLGGAFSLIDHHGNRVTDNDFKGKFSLIYFGFTRCPDICPDELDKMSAAIDIVNNVVGDVVYPIFITCDPARDPPQEMAEYLEDFNPKIVGLTGSYEEIKDICKKFRVYFSTPKNIDPKKDDYLVDHSVFFYLMDPEGKFIEVFGRNSTSEDLARAIGSYYLSRKKQK.

Cysteine 130, cysteine 134, and histidine 222 together coordinate Cu cation.

It belongs to the SCO1/2 family.

It is found in the mitochondrion inner membrane. In terms of biological role, acts as a copper chaperone, transporting copper to the Cu(A) site on the cytochrome c oxidase subunit II (COX2). This Schizosaccharomyces pombe (strain 972 / ATCC 24843) (Fission yeast) protein is Protein sco1 (sco1).